Consider the following 219-residue polypeptide: uncharacterized protein (219 aa).

This is an uncharacterized protein from Treponema pallidum (strain Nichols).